The sequence spans 102 residues: Small ribosomal subunit protein uS10 (102 aa).

The protein belongs to the universal ribosomal protein uS10 family. Part of the 30S ribosomal subunit.

Functionally, involved in the binding of tRNA to the ribosomes. This is Small ribosomal subunit protein uS10 from Treponema pallidum (strain Nichols).